We begin with the raw amino-acid sequence, 462 residues long: Glycoprotein endo-alpha-1,2-mannosidase (462 aa).

The Cytoplasmic segment spans residues methionine 1–cysteine 9. A helical; Signal-anchor for type II membrane protein transmembrane segment spans residues isoleucine 10–tryptophan 30. The Lumenal portion of the chain corresponds to proline 31–serine 462. Residues aspartate 60 to serine 462 form a catalytic region.

It belongs to the glycosyl hydrolase 99 family. Post-translationally, undergoes proteolytic cleavage in the C-terminal region. Highly expressed in the liver and kidney.

The protein localises to the golgi apparatus membrane. The catalysed reaction is N-{alpha-Glc-(1-&gt;3)-alpha-Man-(1-&gt;2)-alpha-Man-(1-&gt;2)-alpha-Man-(1-&gt;3)-[alpha-Man-(1-&gt;2)-alpha-Man-(1-&gt;3)-[alpha-Man-(1-&gt;2)-alpha-Man-(1-&gt;6)]-alpha-Man-(1-&gt;6)]-beta-Man-(1-&gt;4)-beta-GlcNAc-(1-&gt;4)-beta-GlcNAc}-L-asparaginyl-[protein] + H2O = alpha-D-glucosyl-(1-&gt;3)-D-mannopyranose + N(4)-{alpha-D-Man-(1-&gt;2)-alpha-D-Man-(1-&gt;3)-[alpha-D-Man-(1-&gt;2)-alpha-D-Man-(1-&gt;3)-[alpha-D-Man-(1-&gt;2)-alpha-D-Man-(1-&gt;6)]-alpha-D-Man-(1-&gt;6)]-beta-D-Man-(1-&gt;4)-beta-D-GlaNAc-(1-&gt;4)-beta-D-GlcNAc}-L-asparaginyl-[protein] (N-glucan mannose isomer 8A1,2,3B1,2). The protein is Glycoprotein endo-alpha-1,2-mannosidase (Manea) of Rattus norvegicus (Rat).